The chain runs to 92 residues: Small ribosomal subunit protein uS19 (92 aa).

The protein belongs to the universal ribosomal protein uS19 family.

Protein S19 forms a complex with S13 that binds strongly to the 16S ribosomal RNA. The polypeptide is Small ribosomal subunit protein uS19 (Chromobacterium violaceum (strain ATCC 12472 / DSM 30191 / JCM 1249 / CCUG 213 / NBRC 12614 / NCIMB 9131 / NCTC 9757 / MK)).